We begin with the raw amino-acid sequence, 1578 residues long: E3 ubiquitin-protein ligase HECW2 (1578 aa).

S48 bears the Phosphoserine mark. Positions 171-298 (MEGGASGSLH…LERQAGDQML (128 aa)) constitute a C2 domain. Disordered stretches follow at residues 341–453 (HTVN…FPTD) and 496–802 (IDDG…PSVR). A compositionally biased stretch (polar residues) spans 386 to 406 (RTSSTLEIDTEDLISTSSRNS). A compositionally biased stretch (basic and acidic residues) spans 518-532 (ASIHETASLEERLEN). Over residues 559–576 (SADQGSTELCSSQEVDQP) the composition is skewed to polar residues. Low complexity predominate over residues 577–593 (TSGADAGASDTSGGSRR). 3 stretches are compositionally biased toward polar residues: residues 597–614 (ETES…SSET), 643–664 (SSCN…SSLE), and 688–708 (PTSS…SSLP). 3 stretches are compositionally biased toward low complexity: residues 721–735 (AAEA…ELGE), 746–755 (AAAAAPAAAA), and 769–782 (AQGA…QEEG). The tract at residues 737-1074 (WQRRGSLEGA…PRPSSTFNTV (338 aa)) is interaction with TP73. The 34-residue stretch at 813-846 (EALPPNWEARIDSHGRIFYVDHVNRTTTWQRPTA) folds into the WW 1 domain. The stretch at 853–880 (LQRSNSIQQMEQLNRRYQSIRRTMTNER) forms a coiled coil. Phosphoserine occurs at positions 858 and 915. The WW 2 domain occupies 991–1024 (LELPRGWEMKHDHQGKAFFVDHNSRTTTFIDPRL). Disordered stretches follow at residues 1030–1075 (RPTS…NTVS) and 1167–1193 (CQSP…RAPA). A compositionally biased stretch (basic residues) spans 1037 to 1046 (HRQHLTRQRS). A compositionally biased stretch (polar residues) spans 1167–1187 (CQSPRGSPVSSPQNSPGTQRA). The residue at position 1181 (S1181) is a Phosphoserine. In terms of domain architecture, HECT spans 1243–1578 (SRKDLQRNKL…VEETSTFGLE (336 aa)). The active-site Glycyl thioester intermediate is C1546.

Interacts with TP73. Interacts with FZR1.

Its subcellular location is the cytoplasm. The protein resides in the cytoskeleton. It localises to the spindle. It catalyses the reaction S-ubiquitinyl-[E2 ubiquitin-conjugating enzyme]-L-cysteine + [acceptor protein]-L-lysine = [E2 ubiquitin-conjugating enzyme]-L-cysteine + N(6)-ubiquitinyl-[acceptor protein]-L-lysine.. Its pathway is protein modification; protein ubiquitination. Its function is as follows. E3 ubiquitin-protein ligase that mediates ubiquitination of TP73. Acts to stabilize TP73 and enhance activation of transcription by TP73. Involved in the regulation of mitotic metaphase/anaphase transition. This chain is E3 ubiquitin-protein ligase HECW2 (Hecw2), found in Mus musculus (Mouse).